Consider the following 366-residue polypeptide: Protein sigma-NS (366 aa).

The tract at residues 1–11 (MASSLRAAISK) is important for ssRNA-binding and formation of complexes.

It belongs to the orthoreovirus sigma-NS protein family. As to quaternary structure, homooligomer; in presence of RNA. Interacts with protein mu-NS; this interaction allows the localization of sigma-NS to the viral factories. Interacts with host G3BP1 (via C-terminus); this interaction induces the relocalization of G3BP1 and other SG proteins to the viral factories periphery.

The protein resides in the host cytoplasm. Its function is as follows. Protein that binds to ssRNA and participates with protein mu-NS in forming the matrix of viral factories, which are large inclusions in the host cytoplasm where replication intermediates are assembled and viral RNA replication takes place. Plays a role in the inhibition of the integrated stress response (ISR) to escape from host cell translational shutoff. Participates in the disruption of stress granules (SG) through its association with host G3BP1 and mu-NS. This chain is Protein sigma-NS (S3), found in Mammalia (T3D).